The primary structure comprises 742 residues: Vesicle-fusing ATPase (742 aa).

ATP contacts are provided by residues 499 to 504 and 539 to 546; these read NGMVDC and SGSGKTAL. A Mg(2+)-binding site is contributed by T544.

The protein belongs to the AAA ATPase family. As to quaternary structure, homohexamer. Binds to SNARE-SNAP complexes to form 20S particles. It depends on Mg(2+) as a cofactor.

It is found in the cytoplasm. It carries out the reaction ATP + H2O = ADP + phosphate + H(+). In terms of biological role, required for vesicle-mediated transport. Catalyzes the fusion of transport vesicles within the Golgi cisternae. Is also required for transport from the endoplasmic reticulum to the Golgi stack. Seems to function as a fusion protein required for the delivery of cargo proteins to all compartments of the Golgi stack independent of vesicle origin. Required for maintaining the normal morphology of the Golgi apparatus. The protein is Vesicle-fusing ATPase of Arabidopsis thaliana (Mouse-ear cress).